A 161-amino-acid chain; its full sequence is 2-C-methyl-D-erythritol 2,4-cyclodiphosphate synthase (161 aa).

Residues Asp9 and His11 each contribute to the a divalent metal cation site. 4-CDP-2-C-methyl-D-erythritol 2-phosphate is bound by residues Asp9–His11 and His37–Ser38. Residue His45 coordinates a divalent metal cation. Residues Asp59–Gly61, Phe64–Asp68, Thr135–Glu138, and Arg145 each bind 4-CDP-2-C-methyl-D-erythritol 2-phosphate.

This sequence belongs to the IspF family. In terms of assembly, homotrimer. A divalent metal cation serves as cofactor.

The catalysed reaction is 4-CDP-2-C-methyl-D-erythritol 2-phosphate = 2-C-methyl-D-erythritol 2,4-cyclic diphosphate + CMP. It functions in the pathway isoprenoid biosynthesis; isopentenyl diphosphate biosynthesis via DXP pathway; isopentenyl diphosphate from 1-deoxy-D-xylulose 5-phosphate: step 4/6. Functionally, involved in the biosynthesis of isopentenyl diphosphate (IPP) and dimethylallyl diphosphate (DMAPP), two major building blocks of isoprenoid compounds. Catalyzes the conversion of 4-diphosphocytidyl-2-C-methyl-D-erythritol 2-phosphate (CDP-ME2P) to 2-C-methyl-D-erythritol 2,4-cyclodiphosphate (ME-CPP) with a corresponding release of cytidine 5-monophosphate (CMP). The chain is 2-C-methyl-D-erythritol 2,4-cyclodiphosphate synthase from Leptospira interrogans serogroup Icterohaemorrhagiae serovar copenhageni (strain Fiocruz L1-130).